We begin with the raw amino-acid sequence, 222 residues long: Dense granule protein 3 (222 aa).

2 consecutive transmembrane segments (helical) span residues 22–42 (LIPF…GGLA) and 162–182 (IPGY…RKVL). The short motif at 219 to 222 (KKQT) is the Prevents secretion from ER element.

In terms of assembly, homodimer. Interacts (via N-terminus) with human host CAMLG (via N-terminus).

Its subcellular location is the cytoplasm. The protein localises to the host endoplasmic reticulum. It localises to the parasitophorous vacuole membrane. In terms of biological role, direct host-parasite interaction occurs at the cytoplasmic faces of the parasitophorous vacuole membrane (PVM) and the host endoplasmic reticulum (ER) membrane via GRA3 and host CAMLG association. Direct insertion of GRA3 ER retrieval motif into the host ER membrane contributes to the host ER recruitment to the PVM. The protein is Dense granule protein 3 of Toxoplasma gondii.